The following is a 906-amino-acid chain: MSPVDFKDKVVIITGAGGGLGKYYSLEFAKLGAKVVVNDLGGALNGQGGNSKAADVVVDEIVKNGGVAVADYNNVLDGDKIVETAVKNFGTVHVIINNAGILRDASMKKMTEKDYKLVIDVHLNGAFAVTKAAWPYFQKQKYGRIVNTSSPAGLYGNFGQANYASAKSALLGFAETLAKEGAKYNIKANAIAPLARSRMTESILPPPMLEKLGPEKVAPLVLYLSSAENELTGQFFEVAAGFYAQIRWERSGGVLFKPDQSFTAEVVAKRFSEILDYDDSRKPEYLKNQYPFMLNDYATLTNEARKLPANDASGAPTVSLKDKVVLITGAGAGLGKEYAKWFAKYGAKVVVNDFKDATKTVDEIKAAGGEAWPDQHDVAKDSEAIIKNVIDKYGTIDILVNNAGILRDRSFAKMSKQEWDSVQQVHLIGTFNLSRLAWPYFVEKQFGRIINITSTSGIYGNFGQANYSSSKAGILGLSKTMAIEGAKNNIKVNIVAPHAETAMTLTIFREQDKNLYHADQVAPLLVYLGTDDVPVTGETFEIGGGWIGNTRWQRAKGAVSHDEHTTVEFIKEHLNEITDFTTDTENPKSTTESSMAILSAVGGDDDDDDEDEEEDEGDEEEDEEDEEEDDPVWRFDDRDVILYNIALGATTKQLKYVYENDSDFQVIPTFGHLITFNSGKSQNSFAKLLRNFNPMLLLHGEHYLKVHSWPPPTEGEIKTTFEPIATTPKGTNVVIVHGSKSVDNKSGELIYSNEATYFIRNCQADNKVYADRPAFATNQFLAPKRAPDYQVDVPVSEDLAALYRLSGDRNPLHIDPNFAKGAKFPKPILHGMCTYGLSAKALIDKFGMFNEIKARFTGIVFPGETLRVLAWKESDDTIVFQTHVVDRGTIAINNAAIKLVGDKAKI.

2 short-chain dehydrogenase like regions span residues 5-228 (DFKD…SSAE) and 319-532 (SLKD…GTDD). NADP(+) contacts are provided by isoleucine 13, lysine 52, asparagine 98, and lysine 131. Active-site proton donor residues include serine 149 and tyrosine 163. The NADP(+) site is built by tyrosine 163 and lysine 167. Catalysis depends on tyrosine 163, which acts as the Proton acceptor. Catalysis depends on lysine 167, which acts as the Lowers pKa of active site Tyr. The active-site Proton acceptor is tyrosine 467. Residues 600–633 (AVGGDDDDDDEDEEEDEGDEEEDEEDEEEDDPVW) form a disordered region. Over residues 603-630 (GDDDDDDEDEEEDEGDEEEDEEDEEEDD) the composition is skewed to acidic residues. (3R)-3-hydroxydecanoyl-CoA-binding residues include histidine 699, glycine 700, lysine 729, tyrosine 757, aspartate 808, asparagine 810, glycine 831, phenylalanine 856, threonine 857, and glycine 858. In terms of domain architecture, MaoC-like spans 782–893 (APKRAPDYQV…VVDRGTIAIN (112 aa)). The Microbody targeting signal signature appears at 904 to 906 (AKI).

The protein belongs to the short-chain dehydrogenases/reductases (SDR) family. In terms of assembly, monomer.

Its subcellular location is the peroxisome. It carries out the reaction a (3R)-3-hydroxyacyl-CoA = a (2E)-enoyl-CoA + H2O. The enzyme catalyses a (3R)-3-hydroxyacyl-CoA + NAD(+) = a 3-oxoacyl-CoA + NADH + H(+). The protein operates within lipid metabolism; fatty acid beta-oxidation. In terms of biological role, second trifunctional enzyme acting on the beta-oxidation pathway for fatty acids, possessing hydratase-dehydrogenase-epimerase activities. Converts trans-2-enoyl-CoA via D-3-hydroxyacyl-CoA to 3-ketoacyl-CoA. The protein is Peroxisomal hydratase-dehydrogenase-epimerase of Candida tropicalis (Yeast).